We begin with the raw amino-acid sequence, 618 residues long: Transcriptional regulator CPUR_05421 (618 aa).

The zn(2)-C6 fungal-type DNA-binding region spans 14 to 41 (CSHLVGREIGCSRDLAGCRRCTSEGRAC). Residues 52–87 (TRRRNRANQDVTRSALYSSNTTPQTISDQATGRPCE) are disordered. The span at 59-81 (NQDVTRSALYSSNTTPQTISDQA) shows a compositional bias: polar residues.

It localises to the nucleus. Functionally, transcriptional regulator; part of the ergochrome gene cluster responsible for the typical purple-black color of the ergot sclerotia. The ergochrome gene cluster produces several ergot pigments including the yellow ergochrome secalonic acid and its derivatives, as well as the red anthraquinones endocrocin and clavorubin. This Claviceps purpurea (strain 20.1) (Ergot fungus) protein is Transcriptional regulator CPUR_05421.